We begin with the raw amino-acid sequence, 354 residues long: Galactoside alpha-(1,2)-fucosyltransferase 2 (354 aa).

The Cytoplasmic portion of the chain corresponds to 1–5 (MASAQ). A helical; Signal-anchor for type II membrane protein membrane pass occupies residues 6–26 (VPFSFPLAHFLIFVFVTSTIT). Residues 27-354 (HLQQRIVKLQ…PADLSPLLKH (328 aa)) are Lumenal-facing. The segment at 43–68 (LPMTTQMSSGNTESPEMRRDSEQHGN) is disordered. Positions 45–56 (MTTQMSSGNTES) are enriched in polar residues. Positions 57–68 (PEMRRDSEQHGN) are enriched in basic and acidic residues. Asparagine 199 carries an N-linked (GlcNAc...) asparagine glycan.

This sequence belongs to the glycosyltransferase 11 family. As to expression, specifically expressed in gut.

It is found in the golgi apparatus. It localises to the golgi stack membrane. It catalyses the reaction a beta-D-galactosyl-(1-&gt;3)-N-acetyl-beta-D-glucosaminyl derivative + GDP-beta-L-fucose = an alpha-L-Fuc-(1-&gt;2)-beta-D-Gal-(1-&gt;3)-beta-D-GlcNAc derivative + GDP + H(+). The catalysed reaction is a beta-D-galactosyl-(1-&gt;4)-N-acetyl-beta-D-glucosaminyl derivative + GDP-beta-L-fucose = an alpha-L-Fuc-(1-&gt;2)-beta-D-Gal-(1-&gt;4)-beta-D-GlcNAc derivative + GDP + H(+). The enzyme catalyses a ganglioside GM1 (d18:1(4E)) + GDP-beta-L-fucose = a ganglioside Fuc-GM1 (d18:1(4E)) + GDP + H(+). It carries out the reaction a globoside GalGb4Cer (d18:1(4E)) + GDP-beta-L-fucose = a globoside Globo-H (d18:1(4E)) + GDP + H(+). It catalyses the reaction a neolactoside nLc4Cer + GDP-beta-L-fucose = a neolactoside IV(2)-alpha-Fuc-nLc4Cer + GDP + H(+). The catalysed reaction is a neolactoside nLc4Cer(d18:1(4E)) + GDP-beta-L-fucose = a neolactoside IV(2)-alpha-Fuc-nLc4Cer(d18:1(4E)) + GDP + H(+). The enzyme catalyses a ganglioside GM1 + GDP-beta-L-fucose = a ganglioside Fuc-GM1 + GDP + H(+). It carries out the reaction a ganglioside GA1 + GDP-beta-L-fucose = a ganglioside Fuc-GA1 + GDP + H(+). It catalyses the reaction Lc4Cer + GDP-beta-L-fucose = alpha-L-fucosyl-(1-&gt;2)-beta-D-galactosyl-(1-&gt;3)-N-acetyl-beta-D-glucosaminyl-(1-&gt;3)-beta-D-galactosyl-(1-&gt;4)-beta-D-glucosyl-(1&lt;-&gt;1')-ceramide + GDP + H(+). The catalysed reaction is a beta-D-Gal-(1-&gt;3)-beta-D-GlcNAc-(1-&gt;3)-beta-D-Gal-(1-&gt;4)-beta-D-Glc-(1&lt;-&gt;1')-Cer(d18:1(4E)) + GDP-beta-L-fucose = alpha-L-fucosyl-(1-&gt;2)- beta-D-galactosyl-(1-&gt;3)-N-acetyl-beta-D-glucosaminyl-(1-&gt;3)-beta-D-galactosyl-(1-&gt;4)-beta-D-glucosyl-(1&lt;-&gt;1')-N-acylsphing-4-enine + GDP + H(+). The enzyme catalyses a ganglioside GD1b + GDP-beta-L-fucose = a ganglioside Fuc-GD1b + GDP + H(+). It carries out the reaction a lactoside III(4)-a-Fuc-Lc4Cer + GDP-beta-L-fucose = a lactoside IV(2),III(4)-a-[Fuc]2-Lc4Cer + GDP + H(+). It catalyses the reaction beta-D-galactosyl-(1-&gt;3)-N-acetyl-D-galactosamine + GDP-beta-L-fucose = alpha-L-fucosyl-(1-&gt;2)-beta-D-galactosyl-(1-&gt;3)-N-acetyl-D-galactosamine + GDP + H(+). It participates in protein modification; protein glycosylation. Catalyzes the transfer of L-fucose, from a guanosine diphosphate-beta-L-fucose, to the terminal galactose on both O- and N-linked glycans chains of cell surface glycoproteins and glycolipids and the resulting epitope regulates several processes such as cell-cell interaction including host-microbe interaction, cell surface expression and cell proliferation. Preferentially fucosylates gangliosides GA1 and GM1 in the antrum, cecum and colon and in the female reproductive organs. Fucosylated host glycoproteins or glycolipids mediate interaction with intestinal microbiota influencing its composition. Creates a soluble precursor oligosaccharide FuC-alpha ((1,2)Galbeta-) called the H antigen which is an essential substrate for the final step in the soluble ABO blood group antigen synthesis pathway. This Rattus norvegicus (Rat) protein is Galactoside alpha-(1,2)-fucosyltransferase 2.